Here is a 493-residue protein sequence, read N- to C-terminus: MSNWDTKFLKKGYTFDDVLLIPAESHVLPNEVDLKTKLADNLTLNIPIITAAMDTVTGSKMAIAIARAGGLGVIHKNMSITEQAEEVRKVKRSENGVIIDPFFLTPEHKVSEAEELMQRYRISGVPIVETLANRKLVGIITNRDMRFISNYNAPISEHMTSEHLVTAAVGTDLETAERILHEHRIEKLPLVDNSGRLSGLITIKDIEKVIEFPHAAKDEFGRLLVAAAVGVTSDTFERAEALFEAGADAIVIDTAHGHSAGVLRKIAEIRAHFPNRTLIAGNIATAEGARALYDAGVDVVKVGIGPGSICTTRVVAGVGVPQVTAIYDAAAVAREYGKTIIADGGIKYSGDIVKALAAGGNAVMLGSMFAGTDEAPGETEIYQGRKFKTYRGMGSIAAMKKGSSDRYFQGSVNEANKLVPEGIEGRVAYKGAASDIVFQMLGGIRSGMGYVGAGDIQELHENAQFVEMSGAGLIESHPHDVQITNEAPNYSVH.

CBS domains lie at 97 to 155 and 159 to 219; these read VIID…NAPI and MTSE…AKDE. Residues aspartate 253 and 303–305 contribute to the NAD(+) site; that span reads GIG. Residues glycine 305 and glycine 307 each coordinate K(+). Residue serine 308 coordinates IMP. K(+) is bound at residue cysteine 310. Cysteine 310 functions as the Thioimidate intermediate in the catalytic mechanism. IMP-binding positions include 343–345, 366–367, and 390–394; these read DGG, GS, and YRGMG. Arginine 406 functions as the Proton acceptor in the catalytic mechanism. Glutamate 421 contributes to the IMP binding site. Glutamate 475, serine 476, and histidine 477 together coordinate K(+).

It belongs to the IMPDH/GMPR family. As to quaternary structure, homotetramer. The cofactor is K(+).

The enzyme catalyses IMP + NAD(+) + H2O = XMP + NADH + H(+). Its pathway is purine metabolism; XMP biosynthesis via de novo pathway; XMP from IMP: step 1/1. Its activity is regulated as follows. Mycophenolic acid (MPA) is a non-competitive inhibitor that prevents formation of the closed enzyme conformation by binding to the same site as the amobile flap. In contrast, mizoribine monophosphate (MZP) is a competitive inhibitor that induces the closed conformation. MPA is a potent inhibitor of mammalian IMPDHs but a poor inhibitor of the bacterial enzymes. MZP is a more potent inhibitor of bacterial IMPDH. Its function is as follows. Catalyzes the conversion of inosine 5'-phosphate (IMP) to xanthosine 5'-phosphate (XMP), the first committed and rate-limiting step in the de novo synthesis of guanine nucleotides, and therefore plays an important role in the regulation of cell growth. In Streptococcus pyogenes serotype M3 (strain ATCC BAA-595 / MGAS315), this protein is Inosine-5'-monophosphate dehydrogenase.